We begin with the raw amino-acid sequence, 210 residues long: Large ribosomal subunit protein bL9 (210 aa).

Positions 172-210 (EAAAAALEPDSEEEFEAATPPSELAAEASDEDADDAKEA) are disordered. Positions 199 to 210 (ASDEDADDAKEA) are enriched in acidic residues.

This sequence belongs to the bacterial ribosomal protein bL9 family.

In terms of biological role, binds to the 23S rRNA. The polypeptide is Large ribosomal subunit protein bL9 (Sphingopyxis alaskensis (strain DSM 13593 / LMG 18877 / RB2256) (Sphingomonas alaskensis)).